The following is a 294-amino-acid chain: Ankyrin repeat and SOCS box protein 9 (294 aa).

Position 1 is an N-acetylmethionine (methionine 1). ANK repeat units follow at residues 35–64 (SDWS…AVNI), 68–97 (DHVS…QVNG), 101–130 (DWHT…SVQP), 133–162 (DLAS…NIDH), 166–195 (HLGT…DVNQ), and 198–227 (GQDS…DTQA). At serine 51 the chain carries Phosphoserine. One can recognise an SOCS box domain in the interval 240–294 (PPESPLAQLFLEREGPPSLMQLCRLRIRKCFGIQQHHKITKLVLPEDLKQFLLHL).

The protein belongs to the ankyrin SOCS box (ASB) family. Substrate-recognition component of the ECS(ASB9) complex, composed of ASB9, CUL5, ELOB, ELOC and RNF7/RBX2. In terms of tissue distribution, predominantly expressed in testis, kidney, and liver.

It is found in the mitochondrion. It participates in protein modification; protein ubiquitination. In terms of biological role, substrate-recognition component of a cullin-5-RING E3 ubiquitin-protein ligase complex (ECS complex, also named CRL5 complex), which mediates the ubiquitination and subsequent proteasomal degradation of target proteins. The ECS(ASB9) complex catalyzes ubiquitination of creatine kinases CKB and CKMT1A. Its function is as follows. Does not interact with the Elongin BC complex, likely to be a negative regulator of isoform 1. The sequence is that of Ankyrin repeat and SOCS box protein 9 from Homo sapiens (Human).